The primary structure comprises 1879 residues: Protein TIC 214 (1879 aa).

6 helical membrane passes run 18–38, 64–84, 87–107, 124–144, 172–192, and 218–238; these read IINSVVVVGLYYGFLTTFSIG, FITGQLMMFISIYYAPLHLAL, PYTITVLALPYLLFHFFWTNP, LSIQCVFLNNLIFQLFNHFIL, VGWLIGHILFMKSVGLILVWI, and IAPIFSIILFITWVYYLGRIP. Disordered regions lie at residues 245–305 and 586–702; these read ETSK…IDET and ISTS…DEPM. Composition is skewed to acidic residues over residues 253–268 and 295–305; these read AETEESEEETDVEIET and EKEDPDKIDET. The segment covering 586-688 has biased composition (low complexity); sequence ISTSTPTSTP…SIPASTSTST (103 aa). Residues 691–701 show a composition bias toward basic and acidic residues; it reads IKSKDEPKDEP.

It belongs to the TIC214 family. As to quaternary structure, part of the Tic complex.

It is found in the plastid. The protein localises to the chloroplast inner membrane. Involved in protein precursor import into chloroplasts. May be part of an intermediate translocation complex acting as a protein-conducting channel at the inner envelope. The protein is Protein TIC 214 of Cucumis sativus (Cucumber).